Consider the following 401-residue polypeptide: Multidrug resistance protein MdtH (401 aa).

Over 1-12 the chain is Cytoplasmic; sequence MSRVSQARNLGK. Residues 13 to 33 form a helical membrane-spanning segment; that stretch reads YFLLIDNMLVVLGFFVVFPLV. Topologically, residues 34–98 are periplasmic; that stretch reads SIRFVDQMGW…GFATMGIAHE (65 aa). A helical transmembrane segment spans residues 99–116; that stretch reads PWLLWFSCLLSGLGGTLF. At 117-137 the chain is on the cytoplasmic side; sequence DPPRSALVVKLMPQQRGRFFS. A helical transmembrane segment spans residues 138-158; the sequence is LLMMQDSAGAVIGALLGSWLL. Residues 159–163 are Periplasmic-facing; the sequence is QYDFR. Residues 164–184 form a helical membrane-spanning segment; that stretch reads LVCATGAVLFVLCAAFNAWLL. Topologically, residues 185-212 are cytoplasmic; it reads PAWKLSTIRTPVREGMTRVMRDKRFVTY. A helical transmembrane segment spans residues 213 to 233; it reads VLTLAGYYMLAVQVMLMLPIM. Residues 234 to 242 are Periplasmic-facing; it reads VNDVAGAPS. The chain crosses the membrane as a helical span at residues 243–263; sequence AVKWMYAIEACLSLTLLYPIA. The Cytoplasmic portion of the chain corresponds to 264–275; it reads RWSEKHFRLEHR. A helical transmembrane segment spans residues 276–296; sequence LMAGLLIMSLSMMPVGMVSGL. At 297 to 298 the chain is on the periplasmic side; it reads QQ. A helical transmembrane segment spans residues 299 to 319; sequence LFTLICLFYIGSIIAEPARET. The Cytoplasmic segment spans residues 320–338; the sequence is LSASLADARARGSYMGFSR. Residues 339–359 traverse the membrane as a helical segment; that stretch reads LGLAIGGTIGYIGGGWLFDLG. The Periplasmic portion of the chain corresponds to 360-366; that stretch reads KSAHQPE. Residues 367-387 traverse the membrane as a helical segment; sequence LPWMMLGIIGIFTFLALGWQF. The Cytoplasmic segment spans residues 388 to 401; that stretch reads SQKRAARRLLERDA.

Belongs to the major facilitator superfamily. DHA1 family. MdtH (TC 2.A.1.2.21) subfamily.

The protein resides in the cell inner membrane. The chain is Multidrug resistance protein MdtH from Shigella dysenteriae serotype 1 (strain Sd197).